We begin with the raw amino-acid sequence, 228 residues long: Ion-translocating oxidoreductase complex subunit E (228 aa).

The next 5 helical transmembrane spans lie at 18–38 (ALVQ…ATNA), 69–89 (IPIY…LINA), 92–112 (FGLY…CIVV), 125–145 (LLSA…MFVL), and 182–202 (PFLL…MLAV).

This sequence belongs to the NqrDE/RnfAE family. The complex is composed of six subunits: RnfA, RnfB, RnfC, RnfD, RnfE and RnfG.

Its subcellular location is the cell inner membrane. Its function is as follows. Part of a membrane-bound complex that couples electron transfer with translocation of ions across the membrane. In Cronobacter sakazakii (strain ATCC BAA-894) (Enterobacter sakazakii), this protein is Ion-translocating oxidoreductase complex subunit E.